Here is a 1454-residue protein sequence, read N- to C-terminus: MAAMLGRDEDPVGALSGRVSLASTSHRSLVGASKSFRDVFMPQTDEVFGRSERREEDDMELRWAAIERLPTFDRLRKGMLPQTSANGKIELEDIDLTRLEPKDKKHLMEMILSFVEEDNEKFLRDLRERTDRVGIEVPKIEVRYENISVEGDVRSASRALPTLFNVTLNTLESILGFFHLLPSKRKKIQILKDISGIVKPSRMTLLLGPPSSGKTTLLQALAGKLDDTLQMSGRITYCGHEFREFVPQKTCAYISQHDLHFGEMTVREILDFSGRCLGVGSRYQLMSELSRREKEEGIKPDPKIDAFMKSIAISGQETSLVTDYVLKILGLDICADILAGDVMRRGISGGQKKRLTTGEMLVGPARALFMDEISTGLDSSTTFQICKFMRQLVHISDVTMIISLLQPAPETFELFDDIILLSEGQIVYQGPRDNVLEFFEYFGFQCPERKGVADFLQEVTSKKDQEQYWNKREQPYNYVSVSDFSSGFSTFHTGQKLTSEFRVPYDKAKTHSAALVTQKYGISNWELFKACFDREWLLMKRNSFVYVFKTVQITIMSLITMTVYLRTEMHVGTVRDGQKFYGAMFFSLINVMFNGLAELAFTVMRLPVFYKQRDFLFYPPWAFALPAWLLKIPLSLIESGIWIGLTYYTIGFAPSAARFFRQLLAYFCVNQMALSLFRFLGAIGRTEVISNSIGTFTLLIVFTLGGFIIAKDDIRPWMTWAYYMSPMMYGQTAIVMNEFLDERWSSPNYDTRINAKTVGEVLLKSRGFFTEPYWFWICIVALLGFSLLFNLFYILALMYLNPLGNSKATVVEEGKDKQKGENRGTEGSVVELNSSSNKGPKRGMVLPFQPLSLAFNNVNYYVDMPSEMKAQGVEGDRLQLLRDVGGAFRPGILTALVGVSGAGKTTLMDVLAGRKTGGYIEGSISISGYPKNQTTFARVSGYCEQNDIHSPHVTVYESLIYSAWLRLSTDIDIKTRELFVEEVMELVELKPLRNSIVGLPGVDGLSTEQRKRLTIAVELVANPSIIFMDEPTSGLDARAAAIVMRTVRNTVDTGRTVVCTIHQPSIDIFESFDELLLMKRGGQVIYAGSLGHHSQKLVEYFEAVEGVPKINDGYNPATWMLDVTTPSMESQMSLDFAQIFSNSSLYRRNQELIKDLSTPPPGSKDVYFKTKYAQSFSTQTKACFWKQYWSYWRHPQYNAIRFLMTVVIGVLFGLIFWQIGTKTENEQDLNNFFGAMYAAVLFLGALNAATVQPAIAIERTVFYREKAAGMYSAIPYAISQVAVEIMYNTIQTGVYTLILYSMIGCNWTMAKFLWFYYYMLTSFIYFTLYGMMLMALTPNYQIAGICMSFFLSLWNLFSGFLIPRPQIPIWWRWYYWATPVAWTLYGLITSQVGDKDSMVHISGIGDIDLKTLLKEGFGFEHDFLPVVAVVHIAWILLFLFVFAYGIKFLNFQRR.

Residues 175–448 form the ABC transporter 1 domain; the sequence is LGFFHLLPSK…FEYFGFQCPE (274 aa). 208-215 contacts ATP; sequence GPPSSGKT. One can recognise an ABC transmembrane type-2 1 domain in the interval 526-739; the sequence is ELFKACFDRE…GQTAIVMNEF (214 aa). 7 helical membrane passes run 544 to 564, 584 to 604, 623 to 643, 663 to 683, 689 to 709, 716 to 736, and 775 to 795; these read FVYV…MTVY, MFFS…FTVM, FALP…GIWI, LLAY…LGAI, ISNS…GFII, PWMT…AIVM, and FWIC…FYIL. The segment covering 812–824 has biased composition (basic and acidic residues); that stretch reads EEGKDKQKGENRG. The tract at residues 812-838 is disordered; that stretch reads EEGKDKQKGENRGTEGSVVELNSSSNK. Residues 853-1106 form the ABC transporter 2 domain; sequence LAFNNVNYYV…LVEYFEAVEG (254 aa). ATP is bound at residue 898–905; the sequence is GVSGAGKT. The ABC transmembrane type-2 2 domain maps to 1178–1392; the sequence is TQTKACFWKQ…TLYGLITSQV (215 aa). 7 consecutive transmembrane segments (helical) span residues 1199–1219, 1231–1251, 1285–1303, 1312–1332, 1342–1362, 1367–1387, and 1423–1443; these read AIRF…FWQI, NFFG…AATV, IMYN…YSMI, FLWF…YGMM, IAGI…GFLI, IPIW…LYGL, and FLPV…FVFA.

This sequence belongs to the ABC transporter superfamily. ABCG family. PDR (TC 3.A.1.205) subfamily.

It localises to the membrane. In terms of biological role, may be a general defense protein. The chain is ABC transporter G family member 39 (ABCG39) from Arabidopsis thaliana (Mouse-ear cress).